The primary structure comprises 161 residues: Large ribosomal subunit protein uL11 (161 aa).

This sequence belongs to the universal ribosomal protein uL11 family. Part of the ribosomal stalk of the 50S ribosomal subunit. Interacts with L10 and the large rRNA to form the base of the stalk. L10 forms an elongated spine to which L12 dimers bind in a sequential fashion forming a multimeric L10(L12)X complex.

Functionally, forms part of the ribosomal stalk which helps the ribosome interact with GTP-bound translation factors. This chain is Large ribosomal subunit protein uL11, found in Methanocaldococcus jannaschii (strain ATCC 43067 / DSM 2661 / JAL-1 / JCM 10045 / NBRC 100440) (Methanococcus jannaschii).